The primary structure comprises 606 residues: Pickpocket protein 28 (606 aa).

Residues 1 to 26 are disordered; that stretch reads MRTLTESRRRQSGSSGCKKDSESDDD. 2 consecutive transmembrane segments (helical) span residues 66–86 and 490–510; these read IFFGLAFVLVVILSVFFISNV and GLLGLFMGFSIFSVIEIFFYI.

It belongs to the amiloride-sensitive sodium channel (TC 1.A.6) family. As to expression, expressed in water-sensing neurons in taste bristles on the proboscis but not in carbonation-sensing taste peg neurons (at protein level). Expressed in the tracheal system.

The protein resides in the cell membrane. In terms of biological role, osmosensitive ion channel that mediates the cellular and behavioral response to water. Plays an essential role in gustatory water reception. Part of a complex that plays a role in tracheal liquid clearance. Probable role in sodium transport. This is Pickpocket protein 28 (ppk28) from Drosophila melanogaster (Fruit fly).